A 272-amino-acid chain; its full sequence is Elongation factor Ts (272 aa).

Residues 86–89 (TDFV) form an involved in Mg(2+) ion dislocation from EF-Tu region.

It belongs to the EF-Ts family.

The protein resides in the cytoplasm. In terms of biological role, associates with the EF-Tu.GDP complex and induces the exchange of GDP to GTP. It remains bound to the aminoacyl-tRNA.EF-Tu.GTP complex up to the GTP hydrolysis stage on the ribosome. The sequence is that of Elongation factor Ts from Blochmanniella pennsylvanica (strain BPEN).